A 222-amino-acid chain; its full sequence is Pyridoxal phosphate homeostasis protein (222 aa).

Lys35 bears the N6-(pyridoxal phosphate)lysine mark.

This sequence belongs to the pyridoxal phosphate-binding protein YggS/PROSC family.

Functionally, pyridoxal 5'-phosphate (PLP)-binding protein, which is involved in PLP homeostasis. The chain is Pyridoxal phosphate homeostasis protein from Helicobacter pylori (strain ATCC 700392 / 26695) (Campylobacter pylori).